Reading from the N-terminus, the 628-residue chain is Phosphomethylpyrimidine synthase (628 aa).

The interval 1–22 is disordered; the sequence is MSKQEKTINLSESAQVDQQSVQ. Polar residues predominate over residues 7 to 22; that stretch reads TINLSESAQVDQQSVQ. Residues Asn-232, Met-261, Tyr-290, His-326, 346–348, 387–390, and Glu-426 contribute to the substrate site; these read SRG and DGLR. His-430 is a binding site for Zn(2+). A substrate-binding site is contributed by Tyr-453. His-494 is a Zn(2+) binding site. Cys-574, Cys-577, and Cys-582 together coordinate [4Fe-4S] cluster.

The protein belongs to the ThiC family. In terms of assembly, homodimer. [4Fe-4S] cluster serves as cofactor.

It carries out the reaction 5-amino-1-(5-phospho-beta-D-ribosyl)imidazole + S-adenosyl-L-methionine = 4-amino-2-methyl-5-(phosphooxymethyl)pyrimidine + CO + 5'-deoxyadenosine + formate + L-methionine + 3 H(+). Its pathway is cofactor biosynthesis; thiamine diphosphate biosynthesis. Catalyzes the synthesis of the hydroxymethylpyrimidine phosphate (HMP-P) moiety of thiamine from aminoimidazole ribotide (AIR) in a radical S-adenosyl-L-methionine (SAM)-dependent reaction. The sequence is that of Phosphomethylpyrimidine synthase from Pseudomonas putida (strain W619).